Here is a 1373-residue protein sequence, read N- to C-terminus: Capping protein, Arp2/3 and myosin-I linker protein 3 (1373 aa).

The disordered stretch occupies residues 126–151; the sequence is RGNADTPEGPRDTSPNSETSTSTTHS. The span at 138–151 shows a compositional bias: low complexity; sequence TSPNSETSTSTTHS. LRR repeat units follow at residues 242 to 269, 272 to 299, 333 to 358, 390 to 417, 422 to 446, 453 to 475, 480 to 507, 510 to 536, 541 to 564, and 568 to 591; these read SGSLEELVLDNAGLKTDFVQKLAGVFGE, SCVLHALTLSHNPIEDKGFLSLSQQLLC, ASSLRYLDLSKNPGLLATDEANALYS, CSHLTYLNLARNSCSHRKGREAPPAFKQ, AYTLSHVNLSATRLPLEALRALLQG, LSDLHLDLSSCELRSAGAQALQE, VTCIGSLDLSDNGFDSDLLTLVPALGKN, LKHLFLGKNFNVKAKTLEEILHKLVQL, DCSLQSLSVADSRLKLRTSILINA, and NTCLAKVDLSGNGMEDIGAKMLSK. 2 disordered regions span residues 864–902 and 970–1373; these read RTLSDPPGGAGPGQDPSSRGRGRSHDHEETDDELGTNID and LRHQ…PGTD. A compositionally biased stretch (pro residues) spans 981–997; the sequence is PRTTPPGPGRPSVPVPG. Over residues 1007 to 1022 the composition is skewed to basic and acidic residues; that stretch reads RLDEGLEDFFSRRVMD. Over residues 1047–1062 the composition is skewed to basic residues; it reads QKRRRRGLFHFRRPRS. Pro residues predominate over residues 1078–1097; sequence LPPPPPPPPTQESPPSPDPP. Over residues 1098 to 1108 the composition is skewed to low complexity; it reads SLGNNSSPCWS. Residues 1218–1228 show a composition bias toward basic and acidic residues; the sequence is RRAEATWHIAE. The segment covering 1232–1243 has biased composition (polar residues); the sequence is PNHSCQSPSPAS. Positions 1269–1278 are enriched in pro residues; sequence PIGPRPPKPV. A compositionally biased stretch (basic and acidic residues) spans 1345 to 1358; that stretch reads QSCDKLEPDRRRPP.

The protein belongs to the CARMIL family. As to expression, widely expressed, with much higher levels in fetal tissues than in adult ones. Highly expressed in newborn brain.

It localises to the cytoplasm. It is found in the cell membrane. In Rattus norvegicus (Rat), this protein is Capping protein, Arp2/3 and myosin-I linker protein 3 (Carmil3).